The chain runs to 240 residues: Lactate utilization protein C (240 aa).

The protein belongs to the LutC/YkgG family.

Its function is as follows. Is involved in L-lactate degradation and allows cells to grow with lactate as the sole carbon source. This chain is Lactate utilization protein C, found in Geobacillus thermodenitrificans (strain NG80-2).